The following is a 525-amino-acid chain: GMP synthase [glutamine-hydrolyzing] (525 aa).

One can recognise a Glutamine amidotransferase type-1 domain in the interval 9-207; sequence RILILDFGSQ…VRDICQCEAL (199 aa). Cys86 functions as the Nucleophile in the catalytic mechanism. Catalysis depends on residues His181 and Glu183. The region spanning 208 to 400 is the GMPS ATP-PPase domain; sequence WTPAKIIDDA…LGLPYDMLYR (193 aa). 235–241 is an ATP binding site; the sequence is SGGVDSS.

Homodimer.

The catalysed reaction is XMP + L-glutamine + ATP + H2O = GMP + L-glutamate + AMP + diphosphate + 2 H(+). It functions in the pathway purine metabolism; GMP biosynthesis; GMP from XMP (L-Gln route): step 1/1. In terms of biological role, catalyzes the synthesis of GMP from XMP. The polypeptide is GMP synthase [glutamine-hydrolyzing] (Salmonella paratyphi B (strain ATCC BAA-1250 / SPB7)).